The primary structure comprises 227 residues: Ribose-5-phosphate isomerase A (227 aa).

Residues 28 to 31 (TGST), 85 to 88 (DGAD), and 98 to 101 (KGGG) contribute to the substrate site. Glu107 (proton acceptor) is an active-site residue. Lys125 is a substrate binding site.

This sequence belongs to the ribose 5-phosphate isomerase family. In terms of assembly, homodimer.

The enzyme catalyses aldehydo-D-ribose 5-phosphate = D-ribulose 5-phosphate. It participates in carbohydrate degradation; pentose phosphate pathway; D-ribose 5-phosphate from D-ribulose 5-phosphate (non-oxidative stage): step 1/1. Functionally, catalyzes the reversible conversion of ribose-5-phosphate to ribulose 5-phosphate. The chain is Ribose-5-phosphate isomerase A from Limosilactobacillus reuteri (strain DSM 20016) (Lactobacillus reuteri).